A 429-amino-acid polypeptide reads, in one-letter code: Enolase (429 aa).

Position 162 (Gln-162) interacts with (2R)-2-phosphoglycerate. Glu-204 acts as the Proton donor in catalysis. Positions 241, 283, and 310 each coordinate Mg(2+). (2R)-2-phosphoglycerate contacts are provided by Lys-335, Arg-364, Ser-365, and Lys-386. The active-site Proton acceptor is the Lys-335.

It belongs to the enolase family. Mg(2+) is required as a cofactor.

It localises to the cytoplasm. Its subcellular location is the secreted. It is found in the cell surface. It catalyses the reaction (2R)-2-phosphoglycerate = phosphoenolpyruvate + H2O. It functions in the pathway carbohydrate degradation; glycolysis; pyruvate from D-glyceraldehyde 3-phosphate: step 4/5. In terms of biological role, catalyzes the reversible conversion of 2-phosphoglycerate (2-PG) into phosphoenolpyruvate (PEP). It is essential for the degradation of carbohydrates via glycolysis. The protein is Enolase of Mycobacterium avium (strain 104).